Here is a 1367-residue protein sequence, read N- to C-terminus: Phospholipid-transporting ATPase C4F10.16c (1367 aa).

At 1–154 the chain is on the cytoplasmic side; it reads MPSLINFDAI…PKNLWNQFKN (154 aa). Residues 34 to 104 form a disordered region; the sequence is HNGSLAHEGP…KKNEAGTESG (71 aa). Residues 50-70 are compositionally biased toward basic and acidic residues; the sequence is SSRHHESQFSQEAHAEQRSRD. A compositionally biased stretch (polar residues) spans 77–92; that stretch reads FEGSCNNSDQSWTSRV. Residues 155-172 traverse the membrane as a helical segment; the sequence is IANAFFLFVTLLQCIPLF. At 173–177 the chain is on the lumenal side; it reads CPEHL. A helical membrane pass occupies residues 178–197; the sequence is GLSFIPLSVILLTTAIKDGI. Topologically, residues 198–482 are cytoplasmic; that stretch reads EDYRRCVLDK…PSKRSRITRD (285 aa). The chain crosses the membrane as a helical span at residues 483–503; it reads LNWTIILNFLLLFAMCLFSGV. The Lumenal segment spans residues 504–531; it reads LRSIYSAQNNSARVFELSKNSNTAPAHG. Residues 532 to 552 form a helical membrane-spanning segment; sequence IISIFTSLILFQNLVPISLYI. At 553–1091 the chain is on the cytoplasmic side; it reads TMDIVRSIQS…GRWDYKRMSQ (539 aa). The active-site 4-aspartylphosphate intermediate is Asp-600. ATP-binding residues include Asp-600, Lys-601, Thr-602, Glu-724, Phe-765, Ser-767, Lys-770, Lys-788, Arg-822, Thr-823, Thr-902, Gly-903, Asp-904, Arg-1009, and Lys-1015. Mg(2+) is bound at residue Asp-600. Thr-602 is a binding site for Mg(2+). Asp-1035 is a binding site for Mg(2+). 2 residues coordinate ATP: Asn-1038 and Asp-1039. Asp-1039 contacts Mg(2+). A helical membrane pass occupies residues 1092–1112; that stretch reads MISFFFYKNVIWTFILFWYQF. At 1113 to 1124 the chain is on the lumenal side; sequence YNEFDGNYIFDY. A helical membrane pass occupies residues 1125-1145; the sequence is TYVMLFNLLFTSLPVIIAGCF. Residues 1146-1174 lie on the Cytoplasmic side of the membrane; that stretch reads DQDVDASVSMKNPSLYQRGILGLEWNGKR. The helical transmembrane segment at 1175–1197 threads the bilayer; sequence FWSYMLDGIYQSLVCFGVALFVF. Residues 1198–1212 lie on the Lumenal side of the membrane; that stretch reads KFGDFVSWTGRNIEC. Residues 1213–1233 traverse the membrane as a helical segment; that stretch reads IEDIGLFISSPTIFVINIFIL. The Cytoplasmic portion of the chain corresponds to 1234–1240; the sequence is MNQERLN. The chain crosses the membrane as a helical span at residues 1241–1261; it reads LISLITWMFSIGVFWIWTFIY. Residues 1262-1276 lie on the Lumenal side of the membrane; sequence SEVGPSYAFHKSASR. The chain crosses the membrane as a helical span at residues 1277 to 1297; that stretch reads TCQTFGFWCVTVLTIALCLLP. Arg-1298 is a binding site for a 1,2-diacyl-sn-glycero-3-phospho-L-serine. Over 1298–1367 the chain is Cytoplasmic; sequence RFSYICLQKL…TSVSFDDSNK (70 aa).

Belongs to the cation transport ATPase (P-type) (TC 3.A.3) family. Type IV subfamily. Mg(2+) is required as a cofactor.

The protein resides in the cell membrane. The protein localises to the endoplasmic reticulum membrane. The enzyme catalyses ATP + H2O + phospholipidSide 1 = ADP + phosphate + phospholipidSide 2.. It carries out the reaction a 1,2-diacyl-sn-glycero-3-phosphoethanolamine(out) + ATP + H2O = a 1,2-diacyl-sn-glycero-3-phosphoethanolamine(in) + ADP + phosphate + H(+). The catalysed reaction is a 1,2-diacyl-sn-glycero-3-phosphocholine(out) + ATP + H2O = a 1,2-diacyl-sn-glycero-3-phosphocholine(in) + ADP + phosphate + H(+). It catalyses the reaction a beta-D-glucosyl-(1&lt;-&gt;1')-N-acylsphing-4-enine(out) + ATP + H2O = a beta-D-glucosyl-(1&lt;-&gt;1')-N-acylsphing-4-enine(in) + ADP + phosphate + H(+). The enzyme catalyses a 1,2-diacyl-sn-glycero-3-phospho-L-serine(out) + ATP + H2O = a 1,2-diacyl-sn-glycero-3-phospho-L-serine(in) + ADP + phosphate + H(+). Catalytic component of a P4-ATPase flippase complex which catalyzes the hydrolysis of ATP coupled to the transport of glucosylceramide, phosphatidylcholine, phosphatidylethanolamine, and small amounts of phosphatidylserine from the lumenal to the cytosolic leaflet of the cell membrane and ensures the maintenance of asymmetric distribution of phospholipids. This Schizosaccharomyces pombe (strain 972 / ATCC 24843) (Fission yeast) protein is Phospholipid-transporting ATPase C4F10.16c.